A 313-amino-acid chain; its full sequence is 3'-5' exoribonuclease YhaM (313 aa).

The 117-residue stretch at 163-279 folds into the HD domain; sequence HVVSMLRLAK…LHQIDLMDAS (117 aa).

It belongs to the YhaM family.

In terms of biological role, shows a 3'-5' exoribonuclease activity. In Listeria monocytogenes serotype 4b (strain CLIP80459), this protein is 3'-5' exoribonuclease YhaM.